Reading from the N-terminus, the 149-residue chain is Transcription factor MafF (149 aa).

Positions 51–76 (RLKQRRRTLKNRGYAASCRVKRVCQK) are basic motif. The region spanning 51–114 (RLKQRRRTLK…DTLRGKYEAL (64 aa)) is the bZIP domain. The tract at residues 79–93 (LQKQKMELEWEVDKL) is leucine-zipper.

Belongs to the bZIP family. Maf subfamily. As to quaternary structure, monomer and homo- or heterodimer. In terms of tissue distribution, highly expressed in the ovary, lower expression in the brain, heart and mesenterium.

It is found in the nucleus. Since it lacks a putative transactivation domain, it may behave as a transcriptional repressor when it dimerizes among itself. May also serve as a transcriptional activator by dimerizing with other (usually larger) basic-zipper proteins and recruiting them to specific DNA-binding sites. May be involved in the cellular stress response. This is Transcription factor MafF (MAFF) from Gallus gallus (Chicken).